Here is a 278-residue protein sequence, read N- to C-terminus: Tryptophan synthase alpha chain (278 aa).

Active-site proton acceptor residues include Glu49 and Asp60.

The protein belongs to the TrpA family. As to quaternary structure, tetramer of two alpha and two beta chains.

It catalyses the reaction (1S,2R)-1-C-(indol-3-yl)glycerol 3-phosphate + L-serine = D-glyceraldehyde 3-phosphate + L-tryptophan + H2O. Its pathway is amino-acid biosynthesis; L-tryptophan biosynthesis; L-tryptophan from chorismate: step 5/5. The alpha subunit is responsible for the aldol cleavage of indoleglycerol phosphate to indole and glyceraldehyde 3-phosphate. In Granulibacter bethesdensis (strain ATCC BAA-1260 / CGDNIH1), this protein is Tryptophan synthase alpha chain.